Reading from the N-terminus, the 301-residue chain is Transcription elongation factor A protein 1 (301 aa).

M1 carries the N-acetylmethionine modification. A TFIIS N-terminal domain is found at 3-80; that stretch reads DEVVRIAKKM…KSWKKLLDGP (78 aa). Residue K55 forms a Glycyl lysine isopeptide (Lys-Gly) (interchain with G-Cter in ubiquitin) linkage. 4 positions are modified to phosphoserine: S57, S81, S97, and S100. A compositionally biased stretch (basic and acidic residues) spans 76 to 93; it reads LLDGPSTDKDPEEKKKEP. The tract at residues 76–139 is disordered; the sequence is LLDGPSTDKD…FPRAPSTSDS (64 aa). One can recognise a TFIIS central domain in the interval 140-256; the sequence is VRLKCREMLA…EHQMAKTGGT (117 aa). A TFIIS-type zinc finger spans residues 259–299; it reads DLFTCGKCKKKNCTYTQVQTRSADEPMTTFVVCNECGNRWK. Zn(2+) contacts are provided by C263, C266, C291, and C294.

The protein belongs to the TFS-II family. As to quaternary structure, interacts with EAF2. Associates with UBR5 and forms a transcription regulatory complex made of CDK9, Pol II, UBR5 and TCEA1/TFIIS. Part of TBP-based Pol II pre-initiation complex (PIC), in which Pol II core assembles with general transcription factors and other specific initiation factors including GTF2E1, GTF2E2, GTF2F1, GTF2F2, TCEA1, ERCC2, ERCC3, GTF2H2, GTF2H3, GTF2H4, GTF2H5, GTF2A1, GTF2A2, GTF2B and TBP; this large multi-subunit PIC complex mediates DNA unwinding and targets Pol II core to the transcription start site where the first phosphodiester bond forms.

Its subcellular location is the nucleus. Its function is as follows. Necessary for efficient RNA polymerase II transcription elongation past template-encoded arresting sites. The arresting sites in DNA have the property of trapping a certain fraction of elongating RNA polymerases that pass through, resulting in locked ternary complexes. Cleavage of the nascent transcript by S-II allows the resumption of elongation from the new 3'-terminus. The polypeptide is Transcription elongation factor A protein 1 (Tcea1) (Mus musculus (Mouse)).